Here is a 124-residue protein sequence, read N- to C-terminus: Large ribosomal subunit protein bL20 (124 aa).

It belongs to the bacterial ribosomal protein bL20 family.

Functionally, binds directly to 23S ribosomal RNA and is necessary for the in vitro assembly process of the 50S ribosomal subunit. It is not involved in the protein synthesizing functions of that subunit. The protein is Large ribosomal subunit protein bL20 (rplT) of Mycoplasma genitalium (strain ATCC 33530 / DSM 19775 / NCTC 10195 / G37) (Mycoplasmoides genitalium).